The chain runs to 86 residues: NAD(P)H-quinone oxidoreductase subunit O (86 aa).

It belongs to the complex I NdhO subunit family. As to quaternary structure, NDH-1 can be composed of about 15 different subunits; different subcomplexes with different compositions have been identified which probably have different functions.

Its subcellular location is the cellular thylakoid membrane. It carries out the reaction a plastoquinone + NADH + (n+1) H(+)(in) = a plastoquinol + NAD(+) + n H(+)(out). The enzyme catalyses a plastoquinone + NADPH + (n+1) H(+)(in) = a plastoquinol + NADP(+) + n H(+)(out). NDH-1 shuttles electrons from an unknown electron donor, via FMN and iron-sulfur (Fe-S) centers, to quinones in the respiratory and/or the photosynthetic chain. The immediate electron acceptor for the enzyme in this species is believed to be plastoquinone. Couples the redox reaction to proton translocation, and thus conserves the redox energy in a proton gradient. Cyanobacterial NDH-1 also plays a role in inorganic carbon-concentration. In Prochlorococcus marinus (strain SARG / CCMP1375 / SS120), this protein is NAD(P)H-quinone oxidoreductase subunit O.